Reading from the N-terminus, the 195-residue chain is ATP synthase subunit b (195 aa).

A helical membrane pass occupies residues 28-48 (IFPNVYVLIAHVISLIFLLLL).

It belongs to the ATPase B chain family. In terms of assembly, F-type ATPases have 2 components, F(1) - the catalytic core - and F(0) - the membrane proton channel. F(1) has five subunits: alpha(3), beta(3), gamma(1), delta(1), epsilon(1). F(0) has three main subunits: a(1), b(2) and c(10-14). The alpha and beta chains form an alternating ring which encloses part of the gamma chain. F(1) is attached to F(0) by a central stalk formed by the gamma and epsilon chains, while a peripheral stalk is formed by the delta and b chains.

The protein localises to the cell membrane. Its function is as follows. F(1)F(0) ATP synthase produces ATP from ADP in the presence of a proton or sodium gradient. F-type ATPases consist of two structural domains, F(1) containing the extramembraneous catalytic core and F(0) containing the membrane proton channel, linked together by a central stalk and a peripheral stalk. During catalysis, ATP synthesis in the catalytic domain of F(1) is coupled via a rotary mechanism of the central stalk subunits to proton translocation. In terms of biological role, component of the F(0) channel, it forms part of the peripheral stalk, linking F(1) to F(0). This is ATP synthase subunit b from Malacoplasma penetrans (strain HF-2) (Mycoplasma penetrans).